Here is a 142-residue protein sequence, read N- to C-terminus: Large ribosomal subunit protein uL11 (142 aa).

It belongs to the universal ribosomal protein uL11 family. Part of the ribosomal stalk of the 50S ribosomal subunit. Interacts with L10 and the large rRNA to form the base of the stalk. L10 forms an elongated spine to which L12 dimers bind in a sequential fashion forming a multimeric L10(L12)X complex. One or more lysine residues are methylated.

In terms of biological role, forms part of the ribosomal stalk which helps the ribosome interact with GTP-bound translation factors. The chain is Large ribosomal subunit protein uL11 from Pectobacterium atrosepticum (strain SCRI 1043 / ATCC BAA-672) (Erwinia carotovora subsp. atroseptica).